A 152-amino-acid polypeptide reads, in one-letter code: Small ribosomal subunit protein uS15 (152 aa).

Over residues 1–19 (MAKMHTRRKGRSRSTRPVR) the composition is skewed to basic residues. Positions 1-21 (MAKMHTRRKGRSRSTRPVRKT) are disordered.

This sequence belongs to the universal ribosomal protein uS15 family. Part of the 30S ribosomal subunit.

This is Small ribosomal subunit protein uS15 from Methanocella arvoryzae (strain DSM 22066 / NBRC 105507 / MRE50).